The following is a 195-amino-acid chain: CASP-like protein 1E2 (195 aa).

Over 1 to 29 the chain is Cytoplasmic; sequence MEVESKTSFGGMESKSKEVKVVTGGKLRP. Residues 30-50 traverse the membrane as a helical segment; that stretch reads FDLVLRVVALALTLVAAVLLG. At 51 to 82 the chain is on the extracellular side; sequence VDKQTKVVSLQLLPTLPPMDVPVTAKWRYLSA. A helical transmembrane segment spans residues 83 to 103; sequence FVYFVVSNAIACSYAALSLLL. Over 104–122 the chain is Cytoplasmic; sequence SVGNSKGNKGLGLAITVMD. Residues 123-143 traverse the membrane as a helical segment; that stretch reads LVMVALLFSSNGAAGAIGLMG. Residues 144-165 lie on the Extracellular side of the membrane; sequence YEGNSRVRWGKVCNVFGKFCNQ. A helical transmembrane segment spans residues 166–186; it reads VAVALGLSFFGGLAFFLLVVM. Residues 187–195 are Cytoplasmic-facing; it reads AAFALNKRH.

Belongs to the Casparian strip membrane proteins (CASP) family. As to quaternary structure, homodimer and heterodimers.

It localises to the cell membrane. This Vitis vinifera (Grape) protein is CASP-like protein 1E2.